Reading from the N-terminus, the 248-residue chain is Positive alginate biosynthesis regulatory protein (248 aa).

The Response regulatory domain maps to 2–117 (NVLIVDDEPL…DLAEALKKAS (116 aa)). Position 54 is a 4-aspartylphosphate (Asp-54). The HTH LytTR-type domain maps to 142–247 (ISARTRKGIE…VAGVRRLMHQ (106 aa)).

It participates in glycan biosynthesis; alginate biosynthesis [regulation]. Functionally, positive regulator of the algD gene, which codes for a GDP-mannose dehydrogenase, a key step enzyme in the alginate biosynthesis pathway. This Pseudomonas aeruginosa (strain ATCC 15692 / DSM 22644 / CIP 104116 / JCM 14847 / LMG 12228 / 1C / PRS 101 / PAO1) protein is Positive alginate biosynthesis regulatory protein (algR).